A 157-amino-acid polypeptide reads, in one-letter code: SsrA-binding protein (157 aa).

This sequence belongs to the SmpB family.

It is found in the cytoplasm. Functionally, required for rescue of stalled ribosomes mediated by trans-translation. Binds to transfer-messenger RNA (tmRNA), required for stable association of tmRNA with ribosomes. tmRNA and SmpB together mimic tRNA shape, replacing the anticodon stem-loop with SmpB. tmRNA is encoded by the ssrA gene; the 2 termini fold to resemble tRNA(Ala) and it encodes a 'tag peptide', a short internal open reading frame. During trans-translation Ala-aminoacylated tmRNA acts like a tRNA, entering the A-site of stalled ribosomes, displacing the stalled mRNA. The ribosome then switches to translate the ORF on the tmRNA; the nascent peptide is terminated with the 'tag peptide' encoded by the tmRNA and targeted for degradation. The ribosome is freed to recommence translation, which seems to be the essential function of trans-translation. The protein is SsrA-binding protein of Bacillus licheniformis (strain ATCC 14580 / DSM 13 / JCM 2505 / CCUG 7422 / NBRC 12200 / NCIMB 9375 / NCTC 10341 / NRRL NRS-1264 / Gibson 46).